The primary structure comprises 182 residues: Large ribosomal subunit protein uL5 (182 aa).

It belongs to the universal ribosomal protein uL5 family. In terms of assembly, part of the 50S ribosomal subunit; part of the 5S rRNA/L5/L18/L25 subcomplex. Contacts the 5S rRNA and the P site tRNA. Forms a bridge to the 30S subunit in the 70S ribosome.

This is one of the proteins that bind and probably mediate the attachment of the 5S RNA into the large ribosomal subunit, where it forms part of the central protuberance. In the 70S ribosome it contacts protein S13 of the 30S subunit (bridge B1b), connecting the 2 subunits; this bridge is implicated in subunit movement. Contacts the P site tRNA; the 5S rRNA and some of its associated proteins might help stabilize positioning of ribosome-bound tRNAs. The polypeptide is Large ribosomal subunit protein uL5 (Thermus thermophilus (strain ATCC BAA-163 / DSM 7039 / HB27)).